Consider the following 384-residue polypeptide: Cysteine desulfurase (384 aa).

Residues 74–75, Asn154, Gln180, and 200–202 contribute to the pyridoxal 5'-phosphate site; these read GT and SGH. Lys203 carries the post-translational modification N6-(pyridoxal phosphate)lysine. Thr238 is a pyridoxal 5'-phosphate binding site. The active-site Cysteine persulfide intermediate is the Cys325. Cys325 serves as a coordination point for [2Fe-2S] cluster.

This sequence belongs to the class-V pyridoxal-phosphate-dependent aminotransferase family. NifS/IscS subfamily. As to quaternary structure, homodimer. Pyridoxal 5'-phosphate serves as cofactor.

It catalyses the reaction (sulfur carrier)-H + L-cysteine = (sulfur carrier)-SH + L-alanine. Its function is as follows. Catalyzes the removal of elemental sulfur atoms from cysteine to produce alanine. Seems to participate in the biosynthesis of the nitrogenase metalloclusters by providing the inorganic sulfur required for the Fe-S core formation. The chain is Cysteine desulfurase from Rhodobacter capsulatus (Rhodopseudomonas capsulata).